A 576-amino-acid chain; its full sequence is MFYNFISKDSILYRLILCFGIGIGTVFGLSPFSFFSAGVFASISCIFLFFSLNRTSIWKAFLWLLILSQILNFTAFYWIPGAISRISGANTFVSILFFFLYGLISHLKFFLFYTLFRFSKIDSASKTYILLIFPAAGTLSDMITFQIFPWYWGNLISGSIVFEQFASICGVYGLSFLLLFISSTFLILVNYYKYKNSKEFKTSIASLICIAFIYRFGLYRIGYINQSQNELKPKNLSVLMIQPDTSPGTKDLKADASYLSATMSKVFSLAIPTFENSPSLIVIPESAIPFHGTIDSEENRKEKIYSSTMEGIILYLSKHTGADVLFNELNLDENKLRNQVSLFKNLDGKTERYNKRRLLPFGEYLPMEKNFPFLRSIFQETSRYVPGEFPKLLIGNKIQNQRSFLPPEISKLNEPKTYRYEFSSIVEHTNKIRNLEYSYSILPLLCYEAMFTELVLDYFQNEQKPEVLINITNDSWFDSELEAYQHSGAVRLRAIETGLPLIRSAVSGISEVWDARGIPMIVPIGFHETGTRAFSIRLDAIESTIYTRFGNSFLWIFCILILISRLIFVSRIERKS.

7 consecutive transmembrane segments (helical) span residues 15 to 35, 38 to 58, 60 to 80, 92 to 112, 128 to 148, 168 to 188, and 204 to 224; these read LILCFGIGIGTVFGLSPFSFF, GVFASISCIFLFFSLNRTSIW, AFLWLLILSQILNFTAFYWIP, FVSILFFFLYGLISHLKFFLF, YILLIFPAAGTLSDMITFQIF, ICGVYGLSFLLLFISSTFLIL, and IASLICIAFIYRFGLYRIGYI. Residues 236–538 form the CN hydrolase domain; the sequence is LSVLMIQPDT…TGTRAFSIRL (303 aa). The active-site Proton acceptor is glutamate 285. The active site involves lysine 355. Residue cysteine 446 is the Nucleophile of the active site. A helical transmembrane segment spans residues 549 to 569; the sequence is FGNSFLWIFCILILISRLIFV.

This sequence belongs to the CN hydrolase family. Apolipoprotein N-acyltransferase subfamily.

Its subcellular location is the cell inner membrane. The catalysed reaction is N-terminal S-1,2-diacyl-sn-glyceryl-L-cysteinyl-[lipoprotein] + a glycerophospholipid = N-acyl-S-1,2-diacyl-sn-glyceryl-L-cysteinyl-[lipoprotein] + a 2-acyl-sn-glycero-3-phospholipid + H(+). The protein operates within protein modification; lipoprotein biosynthesis (N-acyl transfer). In terms of biological role, catalyzes the phospholipid dependent N-acylation of the N-terminal cysteine of apolipoprotein, the last step in lipoprotein maturation. This is Apolipoprotein N-acyltransferase 1 from Leptospira interrogans serogroup Icterohaemorrhagiae serovar copenhageni (strain Fiocruz L1-130).